Consider the following 500-residue polypeptide: Maturase K (500 aa).

Belongs to the intron maturase 2 family. MatK subfamily.

Its subcellular location is the plastid. It is found in the chloroplast. Usually encoded in the trnK tRNA gene intron. Probably assists in splicing its own and other chloroplast group II introns. The polypeptide is Maturase K (Prunus laurocerasus (Cherry laurel)).